Reading from the N-terminus, the 428-residue chain is Adenylosuccinate synthetase (428 aa).

GTP is bound by residues 12-18 (GDEGKGK) and 40-42 (GHS). Residue Asp13 is the Proton acceptor of the active site. 2 residues coordinate Mg(2+): Asp13 and Gly40. Residues 13–16 (DEGK), 38–41 (NAGH), Thr128, Arg142, Gln223, Thr238, and Arg302 each bind IMP. Residue His41 is the Proton donor of the active site. 298 to 304 (VTTGRPR) is a binding site for substrate. Residues Arg304, 330-332 (KLD), and 412-414 (GTG) each bind GTP.

This sequence belongs to the adenylosuccinate synthetase family. As to quaternary structure, homodimer. Requires Mg(2+) as cofactor.

The protein resides in the cytoplasm. It carries out the reaction IMP + L-aspartate + GTP = N(6)-(1,2-dicarboxyethyl)-AMP + GDP + phosphate + 2 H(+). It participates in purine metabolism; AMP biosynthesis via de novo pathway; AMP from IMP: step 1/2. Its function is as follows. Plays an important role in the de novo pathway of purine nucleotide biosynthesis. Catalyzes the first committed step in the biosynthesis of AMP from IMP. The sequence is that of Adenylosuccinate synthetase from Bifidobacterium longum (strain DJO10A).